Consider the following 562-residue polypeptide: MAIIYLILLFTAVRGDQICIGYHANNSTEKVDTILERNVTVTHAKDILEKTHNGKLCKLNGIPPLELGDCSIAGWLLGNPECDRLLSVPEWSYIMEKENPRDGLCYPGSFNDYEELKHLLSSVKHFEKVKILPKDRWTQHTTTGGSRACAVSGNPSFFRNMVWLTEKGSNYPVAKGSYNNTSGEQMLIIWGVHHPNDEKEQRTLYQNVGTYVSVGTSTLNKRSTPDIATRPKVNGLGSRMEFSWTLLDMWDTINFESTGNLIAPEYGFKISKRGSSGIMKTEGTLENCETKCQTPLGAINTTLPFHNVHPLTIGECPKYVKSEKLVLATGLRNVPQIESRGLFGAIAGFIEGGWQGMIDGWYGYHHSNDQGSGYAADKESTQKAFDGITNKVNSVIEKMNTQFEAVGKEFSNLERRLENLNKKMEDGFLDVWTYNAELLVLMENERTLDFHDSNVKNLYDKVRMQLRDNVKELGNGCFEFYHKCDDECMNSVKNGTYDYPKYEEESKLNRNEIKGVKLSSMGVYQILAIYATVAGSLSLAIMMAGISFWMCSNGSLQCRICI.

The first 15 residues, 1–15 (MAIIYLILLFTAVRG), serve as a signal peptide directing secretion. The Extracellular portion of the chain corresponds to 16 to 525 (DQICIGYHAN…VKLSSMGVYQ (510 aa)). 6 cysteine pairs are disulfide-bonded: Cys-19/Cys-477, Cys-57/Cys-288, Cys-70/Cys-82, Cys-105/Cys-149, Cys-292/Cys-316, and Cys-484/Cys-488. Asn-25, Asn-26, and Asn-38 each carry an N-linked (GlcNAc...) asparagine; by host glycan. N-linked (GlcNAc...) asparagine; by host glycans are attached at residues Asn-179, Asn-180, and Asn-300. Asn-494 carries an N-linked (GlcNAc...) asparagine; by host glycan. The helical transmembrane segment at 526–546 (ILAIYATVAGSLSLAIMMAGI) threads the bilayer. At 547 to 562 (SFWMCSNGSLQCRICI) the chain is on the cytoplasmic side. 3 S-palmitoyl cysteine; by host lipidation sites follow: Cys-551, Cys-558, and Cys-561.

It belongs to the influenza viruses hemagglutinin family. In terms of assembly, homotrimer of disulfide-linked HA1-HA2. Palmitoylated. Post-translationally, in natural infection, inactive HA is matured into HA1 and HA2 outside the cell by one or more trypsin-like, arginine-specific endoprotease secreted by the bronchial epithelial cells. One identified protease that may be involved in this process is secreted in lungs by club cells.

It is found in the virion membrane. The protein localises to the host apical cell membrane. Functionally, binds to sialic acid-containing receptors on the cell surface, bringing about the attachment of the virus particle to the cell. This attachment induces virion internalization either through clathrin-dependent endocytosis or through clathrin- and caveolin-independent pathway. Plays a major role in the determination of host range restriction and virulence. Class I viral fusion protein. Responsible for penetration of the virus into the cell cytoplasm by mediating the fusion of the membrane of the endocytosed virus particle with the endosomal membrane. Low pH in endosomes induces an irreversible conformational change in HA2, releasing the fusion hydrophobic peptide. Several trimers are required to form a competent fusion pore. This chain is Hemagglutinin, found in Influenza A virus (strain A/Singapore/1/1957 H2N2).